The sequence spans 163 residues: Type-2 ice-structuring protein (163 aa).

A signal peptide spans 1-17 (MLTVSLLVCAMMALTQA). Positions 18–34 (NDDKILKGTATEAGPVS) are excised as a propeptide. The C-type lectin domain occupies 39–163 (PNCPAGWQPL…SHKSVCAMTF (125 aa)). 5 cysteine pairs are disulfide-bonded: cysteine 41-cysteine 52, cysteine 69-cysteine 159, cysteine 103-cysteine 134, cysteine 123-cysteine 145, and cysteine 135-cysteine 151.

The N-terminus is blocked.

It is found in the secreted. Antifreeze proteins lower the blood freezing point. The polypeptide is Type-2 ice-structuring protein (Hemitripterus americanus (Sea raven)).